A 349-amino-acid chain; its full sequence is GTP 3',8-cyclase (349 aa).

The region spanning 24–249 (PFGRAVTYLR…KDMSYRTGGP (226 aa)) is the Radical SAM core domain. A GTP-binding site is contributed by Arg33. [4Fe-4S] cluster contacts are provided by Cys40 and Cys44. An S-adenosyl-L-methionine-binding site is contributed by Tyr46. Residue Cys47 participates in [4Fe-4S] cluster binding. Arg82 contributes to the GTP binding site. Position 86 (Gly86) interacts with S-adenosyl-L-methionine. Thr116 provides a ligand contact to GTP. Ser140 serves as a coordination point for S-adenosyl-L-methionine. Lys176 contacts GTP. Met210 provides a ligand contact to S-adenosyl-L-methionine. [4Fe-4S] cluster is bound by residues Cys273 and Cys276. 278-280 (RVR) contacts GTP. Cys290 contacts [4Fe-4S] cluster.

This sequence belongs to the radical SAM superfamily. MoaA family. Monomer and homodimer. Requires [4Fe-4S] cluster as cofactor.

It carries out the reaction GTP + AH2 + S-adenosyl-L-methionine = (8S)-3',8-cyclo-7,8-dihydroguanosine 5'-triphosphate + 5'-deoxyadenosine + L-methionine + A + H(+). It functions in the pathway cofactor biosynthesis; molybdopterin biosynthesis. Catalyzes the cyclization of GTP to (8S)-3',8-cyclo-7,8-dihydroguanosine 5'-triphosphate. This Sinorhizobium medicae (strain WSM419) (Ensifer medicae) protein is GTP 3',8-cyclase.